The following is a 663-amino-acid chain: UvrABC system protein B (663 aa).

The Helicase ATP-binding domain occupies 30–417 (DGIKAGKRHQ…TDKMVEQIIR (388 aa)). An ATP-binding site is contributed by 43–50 (GATGTGKT). Positions 96-119 (YYDYYQPEAYVPSTDTFIEKDASI) match the Beta-hairpin motif. A Helicase C-terminal domain is found at 434–600 (QIDDLLSEIQ…TINKKIHDLI (167 aa)). The UVR domain occupies 627 to 662 (QKTIDNIEKEMKQAAKDLDFEKATELRDMLFELKAE).

It belongs to the UvrB family. As to quaternary structure, forms a heterotetramer with UvrA during the search for lesions. Interacts with UvrC in an incision complex.

The protein resides in the cytoplasm. In terms of biological role, the UvrABC repair system catalyzes the recognition and processing of DNA lesions. A damage recognition complex composed of 2 UvrA and 2 UvrB subunits scans DNA for abnormalities. Upon binding of the UvrA(2)B(2) complex to a putative damaged site, the DNA wraps around one UvrB monomer. DNA wrap is dependent on ATP binding by UvrB and probably causes local melting of the DNA helix, facilitating insertion of UvrB beta-hairpin between the DNA strands. Then UvrB probes one DNA strand for the presence of a lesion. If a lesion is found the UvrA subunits dissociate and the UvrB-DNA preincision complex is formed. This complex is subsequently bound by UvrC and the second UvrB is released. If no lesion is found, the DNA wraps around the other UvrB subunit that will check the other stand for damage. In Staphylococcus aureus (strain Mu50 / ATCC 700699), this protein is UvrABC system protein B.